Consider the following 364-residue polypeptide: tRNA-specific 2-thiouridylase MnmA (364 aa).

ATP is bound by residues 13–20 (GMSGGVDS) and M39. Residues 99 to 101 (NPD) form an interaction with target base in tRNA region. C104 (nucleophile) is an active-site residue. A disulfide bond links C104 and C200. G128 contributes to the ATP binding site. Residues 150 to 152 (KDQ) are interaction with tRNA. The active-site Cysteine persulfide intermediate is C200. Residues 310–311 (RY) form an interaction with tRNA region.

The protein belongs to the MnmA/TRMU family.

The protein resides in the cytoplasm. The enzyme catalyses S-sulfanyl-L-cysteinyl-[protein] + uridine(34) in tRNA + AH2 + ATP = 2-thiouridine(34) in tRNA + L-cysteinyl-[protein] + A + AMP + diphosphate + H(+). Catalyzes the 2-thiolation of uridine at the wobble position (U34) of tRNA, leading to the formation of s(2)U34. The polypeptide is tRNA-specific 2-thiouridylase MnmA (Alkaliphilus oremlandii (strain OhILAs) (Clostridium oremlandii (strain OhILAs))).